The chain runs to 36 residues: Phospholipase A2 hemilipin-2 (36 aa).

Belongs to the phospholipase A2 family. Group III subfamily. As to quaternary structure, heterodimer composed of a small subunit and a large subunit; disulfid-linked. The cofactor is Ca(2+). Expressed by the venom gland.

It is found in the secreted. The enzyme catalyses a 1,2-diacyl-sn-glycero-3-phosphocholine + H2O = a 1-acyl-sn-glycero-3-phosphocholine + a fatty acid + H(+). In terms of biological role, scorpion venom phospholipase A2 (PLA2) that impacts angiogenesis in vitro and in vivo without showing any cytotoxic or apoptotic signs. The antiangiogenic effect is independent from the catalytic activity and seems to be held by its small subunit. PLA2 catalyzes the calcium-dependent hydrolysis of the 2-acyl groups in 3-sn-phosphoglycerides. This Hemiscorpius lepturus (Scorpion) protein is Phospholipase A2 hemilipin-2.